Reading from the N-terminus, the 404-residue chain is Glucose-1-phosphate adenylyltransferase (404 aa).

Alpha-D-glucose 1-phosphate is bound by residues Y99, G164, 179–180, and S197; that span reads EK.

It belongs to the bacterial/plant glucose-1-phosphate adenylyltransferase family.

It catalyses the reaction alpha-D-glucose 1-phosphate + ATP + H(+) = ADP-alpha-D-glucose + diphosphate. Its pathway is glycan biosynthesis; glycogen biosynthesis. Functionally, involved in the biosynthesis of ADP-glucose, a building block, required in the biosynthesis of maltose-1-phosphate (M1P) and in the elongation reactions to produce linear alpha-1,4-glucans. Catalyzes the reaction between ATP and alpha-D-glucose 1-phosphate (G1P) to produce pyrophosphate and ADP-Glc. The protein is Glucose-1-phosphate adenylyltransferase of Mycolicibacterium vanbaalenii (strain DSM 7251 / JCM 13017 / BCRC 16820 / KCTC 9966 / NRRL B-24157 / PYR-1) (Mycobacterium vanbaalenii).